A 99-amino-acid chain; its full sequence is ATP-dependent Clp protease adapter protein ClpS (99 aa).

This sequence belongs to the ClpS family. In terms of assembly, binds to the N-terminal domain of the chaperone ClpA.

In terms of biological role, involved in the modulation of the specificity of the ClpAP-mediated ATP-dependent protein degradation. In Acetivibrio thermocellus (strain ATCC 27405 / DSM 1237 / JCM 9322 / NBRC 103400 / NCIMB 10682 / NRRL B-4536 / VPI 7372) (Clostridium thermocellum), this protein is ATP-dependent Clp protease adapter protein ClpS.